Here is a 106-residue protein sequence, read N- to C-terminus: ATP-dependent Clp protease adapter protein ClpS (106 aa).

The protein belongs to the ClpS family. As to quaternary structure, binds to the N-terminal domain of the chaperone ClpA.

Involved in the modulation of the specificity of the ClpAP-mediated ATP-dependent protein degradation. In Methylococcus capsulatus (strain ATCC 33009 / NCIMB 11132 / Bath), this protein is ATP-dependent Clp protease adapter protein ClpS.